Consider the following 108-residue polypeptide: ATP-dependent Clp protease adapter protein ClpS (108 aa).

The protein belongs to the ClpS family. In terms of assembly, binds to the N-terminal domain of the chaperone ClpA.

Functionally, involved in the modulation of the specificity of the ClpAP-mediated ATP-dependent protein degradation. This Ralstonia pickettii (strain 12J) protein is ATP-dependent Clp protease adapter protein ClpS.